Reading from the N-terminus, the 311-residue chain is Ribosomal RNA small subunit methyltransferase H (311 aa).

Residues 33-35, aspartate 51, phenylalanine 78, aspartate 99, and glutamine 106 each bind S-adenosyl-L-methionine; that span reads GGH. A disordered region spans residues 289-311; sequence EEIEKNRRAHSAKLRAAEKLSFA.

This sequence belongs to the methyltransferase superfamily. RsmH family.

The protein resides in the cytoplasm. The enzyme catalyses cytidine(1402) in 16S rRNA + S-adenosyl-L-methionine = N(4)-methylcytidine(1402) in 16S rRNA + S-adenosyl-L-homocysteine + H(+). Its function is as follows. Specifically methylates the N4 position of cytidine in position 1402 (C1402) of 16S rRNA. The chain is Ribosomal RNA small subunit methyltransferase H from Carboxydothermus hydrogenoformans (strain ATCC BAA-161 / DSM 6008 / Z-2901).